A 151-amino-acid chain; its full sequence is Protein NrdI (151 aa).

Belongs to the NrdI family.

In terms of biological role, probably involved in ribonucleotide reductase function. In Mycoplasmopsis pulmonis (strain UAB CTIP) (Mycoplasma pulmonis), this protein is Protein NrdI.